A 343-amino-acid polypeptide reads, in one-letter code: Apolipoprotein L6 (343 aa).

Basic and acidic residues predominate over residues 1–10 (MDNQAERESE). A disordered region spans residues 1–24 (MDNQAERESEAGVGLQRDEDDAPL).

It belongs to the apolipoprotein L family. In terms of tissue distribution, widely expressed; highly expressed in the uterus, fetal brain and spinal cord, also detected in heart, liver, lung, colon, spleen, thymus, prostate, placenta, adrenal gland, salivary and mammary gland.

The protein localises to the cytoplasm. May affect the movement of lipids in the cytoplasm or allow the binding of lipids to organelles. This is Apolipoprotein L6 (APOL6) from Homo sapiens (Human).